The sequence spans 89 residues: Large ribosomal subunit protein bL27 (89 aa).

The segment at 1-22 (MAHKKAGGSSRNGRDSESKRLG) is disordered.

Belongs to the bacterial ribosomal protein bL27 family.

The sequence is that of Large ribosomal subunit protein bL27 from Bartonella tribocorum (strain CIP 105476 / IBS 506).